The following is a 162-amino-acid chain: Putative pre-16S rRNA nuclease (162 aa).

This sequence belongs to the YqgF nuclease family.

It is found in the cytoplasm. Its function is as follows. Could be a nuclease involved in processing of the 5'-end of pre-16S rRNA. This chain is Putative pre-16S rRNA nuclease, found in Brucella melitensis biotype 1 (strain ATCC 23456 / CCUG 17765 / NCTC 10094 / 16M).